Here is a 370-residue protein sequence, read N- to C-terminus: Dual-specificity RNA methyltransferase RlmN (370 aa).

Glu97 (proton acceptor) is an active-site residue. Residues 103 to 340 (EKSRGTLCIS…CTVRRTRGDD (238 aa)) form the Radical SAM core domain. A disulfide bridge connects residues Cys110 and Cys345. 3 residues coordinate [4Fe-4S] cluster: Cys117, Cys121, and Cys124. S-adenosyl-L-methionine contacts are provided by residues 170-171 (GE), Ser202, 224-226 (SLH), and Asn302. Cys345 functions as the S-methylcysteine intermediate in the catalytic mechanism.

Belongs to the radical SAM superfamily. RlmN family. It depends on [4Fe-4S] cluster as a cofactor.

It is found in the cytoplasm. It catalyses the reaction adenosine(2503) in 23S rRNA + 2 reduced [2Fe-2S]-[ferredoxin] + 2 S-adenosyl-L-methionine = 2-methyladenosine(2503) in 23S rRNA + 5'-deoxyadenosine + L-methionine + 2 oxidized [2Fe-2S]-[ferredoxin] + S-adenosyl-L-homocysteine. The enzyme catalyses adenosine(37) in tRNA + 2 reduced [2Fe-2S]-[ferredoxin] + 2 S-adenosyl-L-methionine = 2-methyladenosine(37) in tRNA + 5'-deoxyadenosine + L-methionine + 2 oxidized [2Fe-2S]-[ferredoxin] + S-adenosyl-L-homocysteine. In terms of biological role, specifically methylates position 2 of adenine 2503 in 23S rRNA and position 2 of adenine 37 in tRNAs. m2A2503 modification seems to play a crucial role in the proofreading step occurring at the peptidyl transferase center and thus would serve to optimize ribosomal fidelity. This chain is Dual-specificity RNA methyltransferase RlmN, found in Hydrogenovibrio crunogenus (strain DSM 25203 / XCL-2) (Thiomicrospira crunogena).